Consider the following 340-residue polypeptide: Phospho-N-acetylmuramoyl-pentapeptide-transferase (340 aa).

A run of 10 helical transmembrane segments spans residues 5–25, 50–70, 73–93, 113–133, 147–167, 178–198, 218–238, 242–262, 267–287, and 318–338; these read FILSFFTSLLLMLIFGPHLIN, TPTMGGILIIFSIIISTIIWT, SNPYVWLTLTILIGYGIIGFI, FSLLSILACIIIFLIYYIIND, IIFNTKMICILISYFAIIGTS, GLAIVPIIFVTTNLSIISFIS, LTIICAAIIGSSLGFLWFNTY, IFMGDVGSLSLGGTIGIISVL, ILLIIVGGLFVIETLSVIIQV, and IIRFWIISFILMLLGLLMLKV.

Belongs to the glycosyltransferase 4 family. MraY subfamily. Requires Mg(2+) as cofactor.

The protein resides in the cell membrane. The catalysed reaction is UDP-N-acetyl-alpha-D-muramoyl-L-alanyl-gamma-D-glutamyl-meso-2,6-diaminopimeloyl-D-alanyl-D-alanine + di-trans,octa-cis-undecaprenyl phosphate = di-trans,octa-cis-undecaprenyl diphospho-N-acetyl-alpha-D-muramoyl-L-alanyl-D-glutamyl-meso-2,6-diaminopimeloyl-D-alanyl-D-alanine + UMP. Its pathway is cell wall biogenesis; peptidoglycan biosynthesis. Catalyzes the initial step of the lipid cycle reactions in the biosynthesis of the cell wall peptidoglycan: transfers peptidoglycan precursor phospho-MurNAc-pentapeptide from UDP-MurNAc-pentapeptide onto the lipid carrier undecaprenyl phosphate, yielding undecaprenyl-pyrophosphoryl-MurNAc-pentapeptide, known as lipid I. The chain is Phospho-N-acetylmuramoyl-pentapeptide-transferase from Buchnera aphidicola subsp. Baizongia pistaciae (strain Bp).